Here is a 658-residue protein sequence, read N- to C-terminus: UvrABC system protein B (658 aa).

The Helicase ATP-binding domain maps to 25 to 178 (KSLKNKNHYQ…KSFLLKLVEM (154 aa)). 38–45 (GVTGSGKT) is a binding site for ATP. The Beta-hairpin signature appears at 91–114 (HFDYYQPESYIPRRDLFIEKDSSI). The region spanning 433-607 (QVQDLFDEIK…ELKLRDDETK (175 aa)) is the Helicase C-terminal domain. The region spanning 623–658 (EKIIKELDKKMRECAKNLDFEEAMHLRDEIAKLRTL) is the UVR domain.

This sequence belongs to the UvrB family. In terms of assembly, forms a heterotetramer with UvrA during the search for lesions. Interacts with UvrC in an incision complex.

Its subcellular location is the cytoplasm. In terms of biological role, the UvrABC repair system catalyzes the recognition and processing of DNA lesions. A damage recognition complex composed of 2 UvrA and 2 UvrB subunits scans DNA for abnormalities. Upon binding of the UvrA(2)B(2) complex to a putative damaged site, the DNA wraps around one UvrB monomer. DNA wrap is dependent on ATP binding by UvrB and probably causes local melting of the DNA helix, facilitating insertion of UvrB beta-hairpin between the DNA strands. Then UvrB probes one DNA strand for the presence of a lesion. If a lesion is found the UvrA subunits dissociate and the UvrB-DNA preincision complex is formed. This complex is subsequently bound by UvrC and the second UvrB is released. If no lesion is found, the DNA wraps around the other UvrB subunit that will check the other stand for damage. This is UvrABC system protein B from Helicobacter acinonychis (strain Sheeba).